The primary structure comprises 805 residues: Ubiquitin carboxyl-terminal hydrolase 10-B (805 aa).

2 disordered regions span residues 136-173 (AIPD…YLEG) and 284-305 (DTTE…EDTV). 2 stretches are compositionally biased toward polar residues: residues 143-153 (NADSDGTSGTG) and 284-298 (DTTE…QTLE). One can recognise a USP domain in the interval 422 to 802 (RGLINKGNWC…TAYLLYYRRV (381 aa)). C431 (nucleophile) is an active-site residue. A disordered region spans residues 573–600 (EEVNKEEQEGSDEEWEQVGPRNKSSVTR). Residue H756 is the Proton acceptor of the active site.

This sequence belongs to the peptidase C19 family. USP10 subfamily.

The protein resides in the cytoplasm. It is found in the nucleus. The catalysed reaction is Thiol-dependent hydrolysis of ester, thioester, amide, peptide and isopeptide bonds formed by the C-terminal Gly of ubiquitin (a 76-residue protein attached to proteins as an intracellular targeting signal).. Hydrolase that can remove conjugated ubiquitin from target proteins such as p53/tp53, rps2/us5, rps3/us3, rps10/eS10, becn1, snx3 and cftr. Acts as an essential regulator of p53/tp53 stability: in unstressed cells, specifically deubiquitinates p53/tp53 in the cytoplasm, leading to counteracts MDM2 action and stabilize p53/tp53. Following DNA damage, translocates to the nucleus and deubiquitinates p53/tp53, leading to regulate the p53/TP53-dependent DNA damage response. Component of a regulatory loop that controls autophagy and p53/tp53 levels. Plays a key role in 40S ribosome subunit recycling when a ribosome has stalled during translation: acts both by inhibiting formation of stress granules, which store stalled translation pre-initiation complexes, and mediating deubiquitination of 40S ribosome subunits. Deubiquitinates cftr in early endosomes, enhancing its endocytic recycling. This chain is Ubiquitin carboxyl-terminal hydrolase 10-B (usp10-b), found in Xenopus laevis (African clawed frog).